The chain runs to 151 residues: Deoxyuridine 5'-triphosphate nucleotidohydrolase (151 aa).

Residues 70 to 72 (RSG), N83, 87 to 89 (LID), and M97 each bind substrate.

Belongs to the dUTPase family. Requires Mg(2+) as cofactor.

The catalysed reaction is dUTP + H2O = dUMP + diphosphate + H(+). Its pathway is pyrimidine metabolism; dUMP biosynthesis; dUMP from dCTP (dUTP route): step 2/2. In terms of biological role, this enzyme is involved in nucleotide metabolism: it produces dUMP, the immediate precursor of thymidine nucleotides and it decreases the intracellular concentration of dUTP so that uracil cannot be incorporated into DNA. This chain is Deoxyuridine 5'-triphosphate nucleotidohydrolase, found in Shigella flexneri serotype 5b (strain 8401).